Consider the following 97-residue polypeptide: Co-chaperonin GroES (97 aa).

This sequence belongs to the GroES chaperonin family. In terms of assembly, heptamer of 7 subunits arranged in a ring. Interacts with the chaperonin GroEL.

Its subcellular location is the cytoplasm. Together with the chaperonin GroEL, plays an essential role in assisting protein folding. The GroEL-GroES system forms a nano-cage that allows encapsulation of the non-native substrate proteins and provides a physical environment optimized to promote and accelerate protein folding. GroES binds to the apical surface of the GroEL ring, thereby capping the opening of the GroEL channel. The chain is Co-chaperonin GroES from Stutzerimonas stutzeri (strain A1501) (Pseudomonas stutzeri).